We begin with the raw amino-acid sequence, 277 residues long: Myelin proteolipid protein (277 aa).

Residues 2-9 (GLLECCAR) are Cytoplasmic-facing. Residues Cys-6, Cys-7, and Cys-10 are each lipidated (S-palmitoyl cysteine). Residues 10-36 (CLVGAPFASLVATGLCFFGVALFCGCG) form a helical membrane-spanning segment. At 37–63 (HEALTGTEKLIETYFSKNYQDYEYLIN) the chain is on the extracellular side. The helical transmembrane segment at 64-88 (VIHAFQYVIYGTASFFFLYGALLLA) threads the bilayer. Topologically, residues 89–151 (EGFYTTGAVR…LGKWLGHPDK (63 aa)) are cytoplasmic. Residue Cys-109 is the site of S-palmitoyl cysteine attachment. Phosphoserine is present on Ser-114. Phosphothreonine occurs at positions 116 and 118. Residues Cys-139 and Cys-141 are each lipidated (S-palmitoyl cysteine). The helical transmembrane segment at 152-177 (FVGITYALTVVWLLVFACSAVPVYIY) threads the bilayer. Over 178–233 (FNTWTTCQSIAFPSKTSASIGSLCADARMYGVLPWNAFPGKVCGSNLLSICKTAEF) the chain is Extracellular. 2 disulfides stabilise this stretch: Cys-184–Cys-228 and Cys-201–Cys-220. The O-palmitoyl serine moiety is linked to residue Ser-199. Residues 234–260 (QMTFHLFIAAFVGAAATLVSLLTFMIA) traverse the membrane as a helical segment. Over 261 to 277 (ATYNFAVLKLMGRGTKF) the chain is Cytoplasmic.

The protein belongs to the myelin proteolipid protein family. Interacts with MAL.

The protein localises to the cell membrane. It localises to the myelin membrane. Its function is as follows. This is the major myelin protein from the central nervous system. It plays an important role in the formation or maintenance of the multilamellar structure of myelin. The sequence is that of Myelin proteolipid protein (Plp1) from Mus musculus (Mouse).